Reading from the N-terminus, the 257-residue chain is Synaptosomal-associated protein 29 (257 aa).

The segment at 1 to 42 (MSGYPKSYNPFDDDVEDEDTRPAPWKDARDLPDGPDPPIDRQ) is disordered. A compositionally biased stretch (basic and acidic residues) spans 20-32 (TRPAPWKDARDLP). Serine 77, serine 78, serine 114, serine 163, serine 181, serine 203, and serine 209 each carry phosphoserine. The t-SNARE coiled-coil homology domain occupies 195 to 257 (RAYHQKIDSN…KSTEKKVRQL (63 aa)).

Belongs to the SNAP-25 family. As to quaternary structure, forms a SNARE complex, composed of VAMP8, SNAP29 and STX17, involved in fusion of autophagosome with lysosome. Interacts with multiple syntaxins including STX6. Interacts with EIPR1. Interacts with STX17; this interaction is increased in the absence of TMEM39A. Widely expressed.

The protein localises to the cytoplasm. It localises to the golgi apparatus membrane. It is found in the cytoplasmic vesicle. Its subcellular location is the autophagosome membrane. The protein resides in the cell projection. The protein localises to the cilium membrane. SNAREs, soluble N-ethylmaleimide-sensitive factor-attachment protein receptors, are essential proteins for fusion of cellular membranes. SNAREs localized on opposing membranes assemble to form a trans-SNARE complex, an extended, parallel four alpha-helical bundle that drives membrane fusion. SNAP29 is a SNARE involved in autophagy through the direct control of autophagosome membrane fusion with the lysososome membrane. Also plays a role in ciliogenesis by regulating membrane fusions. In Rattus norvegicus (Rat), this protein is Synaptosomal-associated protein 29.